We begin with the raw amino-acid sequence, 128 residues long: Small ribosomal subunit protein eS8 (128 aa).

Belongs to the eukaryotic ribosomal protein eS8 family. As to quaternary structure, part of the 30S ribosomal subunit.

This chain is Small ribosomal subunit protein eS8, found in Methanococcus vannielii (strain ATCC 35089 / DSM 1224 / JCM 13029 / OCM 148 / SB).